A 223-amino-acid chain; its full sequence is Small ribosomal subunit protein uS3 (223 aa).

The KH type-2 domain occupies 39 to 107 (VREFLHKKLA…PVQINIEEVR (69 aa)).

The protein belongs to the universal ribosomal protein uS3 family. Part of the 30S ribosomal subunit. Forms a tight complex with proteins S10 and S14.

In terms of biological role, binds the lower part of the 30S subunit head. Binds mRNA in the 70S ribosome, positioning it for translation. The polypeptide is Small ribosomal subunit protein uS3 (Francisella tularensis subsp. mediasiatica (strain FSC147)).